A 149-amino-acid chain; its full sequence is UPF0178 protein SE_0451 (149 aa).

This sequence belongs to the UPF0178 family.

This is UPF0178 protein SE_0451 from Staphylococcus epidermidis (strain ATCC 12228 / FDA PCI 1200).